A 374-amino-acid polypeptide reads, in one-letter code: uncharacterized protein (374 aa).

A signal peptide spans 1-23; sequence MDSKWFFIVLISFLLVLPSIVTP. Residues 66 to 374 are disordered; it reads SSSSSSSSSS…SSSSSSSGEN (309 aa).

It localises to the secreted. This is an uncharacterized protein from Dictyostelium discoideum (Social amoeba).